The following is a 462-amino-acid chain: Glycogen synthase 1 (462 aa).

Arg-6 is a binding site for ADP-alpha-D-glucose.

Belongs to the glycosyltransferase 1 family. Bacterial/plant glycogen synthase subfamily.

It catalyses the reaction [(1-&gt;4)-alpha-D-glucosyl](n) + ADP-alpha-D-glucose = [(1-&gt;4)-alpha-D-glucosyl](n+1) + ADP + H(+). It participates in glycan biosynthesis; glycogen biosynthesis. Synthesizes alpha-1,4-glucan chains using ADP-glucose. This Bradyrhizobium diazoefficiens (strain JCM 10833 / BCRC 13528 / IAM 13628 / NBRC 14792 / USDA 110) protein is Glycogen synthase 1.